The sequence spans 406 residues: Ascaroside receptor GPR2 (406 aa).

Topologically, residues 1–29 (MTQLPYLLDRRGGALAAPATAWGDMMLNR) are extracellular. Residues 30–50 (ALFSVALLSSVGSAWVVLSYA) form a helical membrane-spanning segment. Topologically, residues 51–61 (CIKELRSYRHQ) are cytoplasmic. Residues 62–82 (LILGLAISDLLMSLNFMFSAG) form a helical membrane-spanning segment. Over 83–107 (WNVAGGDLALEESRTACSVNGFLTQ) the chain is Extracellular. The cysteines at positions 99 and 173 are disulfide-linked. A helical membrane pass occupies residues 108-128 (VFVVQTDWWILVIAIATYIIL). Residues 129–143 (GNFKTQSQFIQTHVW) are Cytoplasmic-facing. Residues 144–164 (IPWVGPWVLSIIIAAICHGVL) form a helical membrane-spanning segment. Over 165–185 (GYGYIGGWCWLTSDLMRLLIN) the chain is Extracellular. The helical transmembrane segment at 186–206 (FIPRWLIVIAIALIYIRLYMI) threads the bilayer. The Cytoplasmic segment spans residues 207–326 (VRKARKWDIE…AAQLKRIAKK (120 aa)). Residues 327–347 (MMVYPVAYAIIWACPTAIRIY) form a helical membrane-spanning segment. Topologically, residues 348-356 (QGTTGSRAP) are extracellular. A helical membrane pass occupies residues 357 to 377 (LWITIVDKSCIVIQGLVDAVV). The Cytoplasmic portion of the chain corresponds to 378-406 (YGLNERAWQGWRDHIRRIIYKNEGGRIIG).

This sequence belongs to the G-protein coupled receptor 1 family. In terms of assembly, interacts with ascaroside receptor GPR3; may form a functional heterodimer. Interacts with guanine nucleotide-binding protein alpha GPA2; to activate adenylate cyclase and positively regulate nematode trap formation.

Its subcellular location is the cell membrane. Its function is as follows. G protein-coupled receptor that senses nematode ascaroside pheromones and signals via adenylate cyclase to positively regulate trap formation for nematode capture. In Arthrobotrys oligospora (strain ATCC 24927 / CBS 115.81 / DSM 1491) (Nematode-trapping fungus), this protein is Ascaroside receptor GPR2.